A 212-amino-acid chain; its full sequence is Thiamine-phosphate synthase (212 aa).

4-amino-2-methyl-5-(diphosphooxymethyl)pyrimidine contacts are provided by residues 40–44 and Asn75; that span reads QFREK. Mg(2+)-binding residues include Asp76 and Asp95. Ser113 lines the 4-amino-2-methyl-5-(diphosphooxymethyl)pyrimidine pocket. 139 to 141 contributes to the 2-[(2R,5Z)-2-carboxy-4-methylthiazol-5(2H)-ylidene]ethyl phosphate binding site; sequence TTS. A 4-amino-2-methyl-5-(diphosphooxymethyl)pyrimidine-binding site is contributed by Lys142. 2-[(2R,5Z)-2-carboxy-4-methylthiazol-5(2H)-ylidene]ethyl phosphate is bound by residues Gly171 and 191-192; that span reads IS.

The protein belongs to the thiamine-phosphate synthase family. It depends on Mg(2+) as a cofactor.

The catalysed reaction is 2-[(2R,5Z)-2-carboxy-4-methylthiazol-5(2H)-ylidene]ethyl phosphate + 4-amino-2-methyl-5-(diphosphooxymethyl)pyrimidine + 2 H(+) = thiamine phosphate + CO2 + diphosphate. It carries out the reaction 2-(2-carboxy-4-methylthiazol-5-yl)ethyl phosphate + 4-amino-2-methyl-5-(diphosphooxymethyl)pyrimidine + 2 H(+) = thiamine phosphate + CO2 + diphosphate. It catalyses the reaction 4-methyl-5-(2-phosphooxyethyl)-thiazole + 4-amino-2-methyl-5-(diphosphooxymethyl)pyrimidine + H(+) = thiamine phosphate + diphosphate. It participates in cofactor biosynthesis; thiamine diphosphate biosynthesis; thiamine phosphate from 4-amino-2-methyl-5-diphosphomethylpyrimidine and 4-methyl-5-(2-phosphoethyl)-thiazole: step 1/1. Functionally, condenses 4-methyl-5-(beta-hydroxyethyl)thiazole monophosphate (THZ-P) and 2-methyl-4-amino-5-hydroxymethyl pyrimidine pyrophosphate (HMP-PP) to form thiamine monophosphate (TMP). This is Thiamine-phosphate synthase from Staphylococcus saprophyticus subsp. saprophyticus (strain ATCC 15305 / DSM 20229 / NCIMB 8711 / NCTC 7292 / S-41).